Here is a 305-residue protein sequence, read N- to C-terminus: Putative lipid kinase USA300HOU_0749 (305 aa).

Positions asparagine 3–tyrosine 139 constitute a DAGKc domain. ATP-binding positions include serine 44, glycine 74–glutamate 80, and threonine 101. Mg(2+)-binding residues include serine 220, aspartate 223, and glutamate 225. Catalysis depends on glutamate 281, which acts as the Proton acceptor.

Belongs to the diacylglycerol/lipid kinase family. Requires Mg(2+) as cofactor.

Functionally, may catalyze the ATP-dependent phosphorylation of lipids other than diacylglycerol (DAG). The polypeptide is Putative lipid kinase USA300HOU_0749 (Staphylococcus aureus (strain USA300 / TCH1516)).